The chain runs to 302 residues: Cell division protein FtsQ (302 aa).

The interval 1–41 (MPAVVRGGPPKPRRPRAEAPASPSKGKPAPRKAQPAAKLHA) is disordered. Over 1–50 (MPAVVRGGPPKPRRPRAEAPASPSKGKPAPRKAQPAAKLHAARGVGLSPT) the chain is Cytoplasmic. Positions 18–38 (EAPASPSKGKPAPRKAQPAAK) are enriched in low complexity. Residues 51–71 (VALSVAGAALGLGLVVMLATG) form a helical membrane-spanning segment. Over 72-302 (HRAERLGASM…LPGQPAADGA (231 aa)) the chain is Periplasmic. The POTRA domain occupies 94–162 (FRLKTVHIRG…DTVLIAVEER (69 aa)).

This sequence belongs to the FtsQ/DivIB family. FtsQ subfamily.

The protein resides in the cell inner membrane. Its function is as follows. Essential cell division protein. This chain is Cell division protein FtsQ, found in Caulobacter vibrioides (strain ATCC 19089 / CIP 103742 / CB 15) (Caulobacter crescentus).